The primary structure comprises 423 residues: G protein-activated inward rectifier potassium channel 2 (423 aa).

Over methionine 1–tryptophan 89 the chain is Cytoplasmic. Serine 16 and serine 23 each carry phosphoserine. A helical membrane pass occupies residues arginine 90 to isoleucine 114. Residues alanine 115 to glycine 138 are Extracellular-facing. Positions phenylalanine 139 to glutamate 150 form an intramembrane region, helical; Pore-forming. Residues threonine 151 to tyrosine 157 constitute an intramembrane region (pore-forming). The short motif at threonine 152–tyrosine 157 is the Selectivity filter element. Residues arginine 158–glutamate 166 lie on the Extracellular side of the membrane. The chain crosses the membrane as a helical span at residues glycine 167 to cysteine 188. The Cytoplasmic portion of the chain corresponds to methionine 189–valine 423. Residues asparagine 390–valine 423 form a disordered region. The PDZ-binding signature appears at glutamate 420–valine 423.

The protein belongs to the inward rectifier-type potassium channel (TC 1.A.2.1) family. KCNJ6 subfamily. As to quaternary structure, associates with KCNJ3/GIRK1 or KCNJ5/GRIK4 to form a G-protein-activated heteromultimer pore-forming unit. The resulting inward current is much larger. Interacts (via PDZ-binding motif) with SNX27 (via PDZ domain); the interaction is required when endocytosed to prevent degradation in lysosomes and promote recycling to the plasma membrane.

It is found in the membrane. It catalyses the reaction K(+)(in) = K(+)(out). Its activity is regulated as follows. Activated by phosphatidylinositol 4,5 biphosphate (PtdIns(4,5)P2). In terms of biological role, inward rectifier potassium channels are characterized by a greater tendency to allow potassium to flow into the cell rather than out of it. Their voltage dependence is regulated by the concentration of extracellular potassium; as external potassium is raised, the voltage range of the channel opening shifts to more positive voltages. The inward rectification is mainly due to the blockage of outward current by internal magnesium. This potassium channel may be involved in the regulation of insulin secretion by glucose and/or neurotransmitters acting through G-protein-coupled receptors. The chain is G protein-activated inward rectifier potassium channel 2 (KCNJ6) from Pongo abelii (Sumatran orangutan).